The following is a 196-amino-acid chain: Large ribosomal subunit protein uL10 (196 aa).

The segment at 167–196 is disordered; it reads EKKAAEGPAEAPQPATEPPAEAPEAPADAE.

Belongs to the universal ribosomal protein uL10 family. As to quaternary structure, part of the ribosomal stalk of the 50S ribosomal subunit. The N-terminus interacts with L11 and the large rRNA to form the base of the stalk. The C-terminus forms an elongated spine to which L12 dimers bind in a sequential fashion forming a multimeric L10(L12)X complex.

Functionally, forms part of the ribosomal stalk, playing a central role in the interaction of the ribosome with GTP-bound translation factors. The chain is Large ribosomal subunit protein uL10 from Mycolicibacterium paratuberculosis (strain ATCC BAA-968 / K-10) (Mycobacterium paratuberculosis).